The sequence spans 109 residues: Toxin YpjF (109 aa).

It belongs to the CbtA/YkfI/YpjF toxin family. In terms of assembly, interacts with FtsZ but not MreB. Another group finds interaction with FtsZ and MreB.

Functionally, toxic component of a type IV toxin-antitoxin (TA) system. Acts as a dual toxin inhibitor that blocks cell division and cell elongation in genetically separable interactions with FtsZ and MreB. Overexpression results in inhibition of growth in liquid cultures. Overexpression leads to formation of lemon-shaped cells; inactivated by overexpression of cognate antitoxin YfjZ but not when the 2 genes are coexpressed from the same plasmid. Also neutralized by overexpression of non-cognate antitoxins YafW and CbeA. The sequence is that of Toxin YpjF (ypjF) from Escherichia coli (strain K12).